A 913-amino-acid polypeptide reads, in one-letter code: Protein ECT2 (913 aa).

Ala-2 carries the post-translational modification N-acetylalanine. 2 consecutive BRCT domains span residues 176–260 (MLNL…AAVD) and 266–354 (FKVP…MYLY). Residue Thr-359 is modified to Phosphothreonine; by PKC/PRKCI. Phosphoserine is present on residues Ser-367 and Ser-370. Phosphothreonine is present on Thr-373. Phosphoserine is present on Ser-376. 2 consecutive short sequence motifs (nuclear localization signal) follow at residues 378-382 (RKRRR) and 401-405 (PRKRP). Disordered regions lie at residues 389–415 (QLSR…SIGS) and 427–450 (IHYG…PPKQ). Thr-444 bears the Phosphothreonine; by CDK1 mark. One can recognise a DH domain in the interval 452–641 (ARWQVAKELY…KEVMTHINED (190 aa)). A Glycyl lysine isopeptide (Lys-Gly) (interchain with G-Cter in SUMO2) cross-link involves residue Lys-611. Positions 675–794 (RVETVSLGEH…KMLCRHVANT (120 aa)) constitute a PH domain. Phosphoserine is present on residues Ser-716 and Ser-842. Thr-846 bears the Phosphothreonine; by CDK1 mark. The segment at 853-874 (MALSSSHSSEGRSPPSSGKLAV) is disordered. The segment covering 856–870 (SSSHSSEGRSPPSSG) has biased composition (low complexity). Phosphoserine is present on residues Ser-861 and Ser-865.

Homodimer. Homooligomer. Found in the centralspindlin complex. Interacts with NR1I3. Interacts (Thr-359 phosphorylated form) with PARD6A; the interaction is observed in cancer cells. Interacts (Thr-359 phosphorylated form) with PRKCI; the interaction is observed in cancer cells. Interacts with PKP4; the interaction is observed at the midbody. Interacts with RACGAP1; the interaction is direct, occurs in a microtubule-dependent manner, occurs at anaphase and during cytokinesis, is inhibited in metaphase by phosphorylation of ECT2 on Thr-373 and is stimulated in early anaphase by dephosphorylation of ECT2 probably on Thr-373 through CDK1 activity. Interacts with PLK1; the interaction is stimulated upon its phosphorylation on Thr-444. Interacts with RHOA; the interaction results in allosteric activation of ECT2. Interacts with KIF23, PARD3, PARD6B and PRKCQ. Interacts with NEDD9/HEF1. Phosphorylated by PLK1 in vitro. Hyperphosphorylated during the G2 phase of the cell cycle. Phosphorylation at Thr-373 occurs during the G2/M phase, relieves its auto-inhibition status and stimulates its GEF activity. Phosphorylation at Thr-444 in G2/M phase is required for subsequent binding with PLK1 and Rho exchange activation. Dephosphorylated at the time of cytokinesis. Phosphorylation at Thr-359 is required for its transformation activity in cancer cells. In terms of tissue distribution, highest expression in testis. Also detectable in brain, kidney, liver and spleen.

The protein resides in the nucleus. It localises to the cytoplasm. The protein localises to the cytoskeleton. Its subcellular location is the spindle. It is found in the cleavage furrow. The protein resides in the midbody. It localises to the cell junction. The protein localises to the tight junction. Autoinhibited by the C-terminal PH domain which folds back and binds to the surface of the DH domain, blocking binding of RHOA to the catalytic center of the DH domain. The 2nd BRCT domain is also involved in inhibition, probably by helping to impede RHOA binding. Allosterically activated by binding of activated GTP-bound RHOA to the PH domain which stimulates the release of PH inhibition and promotes the binding of substrate RHOA to the catalytic center. Binding of phosphorylated RACGAP1 to the N-terminal BRCT domain-containing region also releases autoinhibition. In terms of biological role, guanine nucleotide exchange factor (GEF) that catalyzes the exchange of GDP for GTP. Promotes guanine nucleotide exchange on the Rho family members of small GTPases, like RHOA, RHOC, RAC1 and CDC42. Required for signal transduction pathways involved in the regulation of cytokinesis. Component of the centralspindlin complex that serves as a microtubule-dependent and Rho-mediated signaling required for the myosin contractile ring formation during the cell cycle cytokinesis. Regulates the translocation of RHOA from the central spindle to the equatorial region. Plays a role in the control of mitotic spindle assembly; regulates the activation of CDC42 in metaphase for the process of spindle fibers attachment to kinetochores before chromosome congression. Involved in the regulation of epithelial cell polarity; participates in the formation of epithelial tight junctions in a polarity complex PARD3-PARD6-protein kinase PRKCQ-dependent manner. Plays a role in the regulation of neurite outgrowth. Inhibits phenobarbital (PB)-induced NR1I3 nuclear translocation. Stimulates the activity of RAC1 through its association with the oncogenic PARD6A-PRKCI complex in cancer cells, thereby acting to coordinately drive tumor cell proliferation and invasion. Also stimulates genotoxic stress-induced RHOB activity in breast cancer cells leading to their cell death. This is Protein ECT2 (Ect2) from Mus musculus (Mouse).